Reading from the N-terminus, the 365-residue chain is tRNA/tmRNA (uracil-C(5))-methyltransferase (365 aa).

S-adenosyl-L-methionine-binding residues include Q189, Y217, N222, E238, and D298. The active-site Nucleophile is the C323. The Proton acceptor role is filled by E357.

Belongs to the class I-like SAM-binding methyltransferase superfamily. RNA M5U methyltransferase family. TrmA subfamily.

It catalyses the reaction uridine(54) in tRNA + S-adenosyl-L-methionine = 5-methyluridine(54) in tRNA + S-adenosyl-L-homocysteine + H(+). The enzyme catalyses uridine(341) in tmRNA + S-adenosyl-L-methionine = 5-methyluridine(341) in tmRNA + S-adenosyl-L-homocysteine + H(+). Its function is as follows. Dual-specificity methyltransferase that catalyzes the formation of 5-methyluridine at position 54 (m5U54) in all tRNAs, and that of position 341 (m5U341) in tmRNA (transfer-mRNA). This chain is tRNA/tmRNA (uracil-C(5))-methyltransferase, found in Pasteurella multocida (strain Pm70).